The following is a 152-amino-acid chain: Ubiquitin-activating enzyme E1 Y (152 aa).

Catalysis depends on Cys-51, which acts as the Glycyl thioester intermediate.

Belongs to the ubiquitin-activating E1 family. As to quaternary structure, monomer.

The catalysed reaction is ATP + ubiquitin + [E1 ubiquitin-activating enzyme]-L-cysteine = AMP + diphosphate + S-ubiquitinyl-[E1 ubiquitin-activating enzyme]-L-cysteine.. It functions in the pathway protein modification; protein ubiquitination. Its function is as follows. Activates ubiquitin by first adenylating its C-terminal glycine residue with ATP, and thereafter linking this residue to the side chain of a cysteine residue in E1, yielding a ubiquitin-E1 thioester and free AMP. The Y chromosome form could be involved in the survival and proliferation of differentiating spermatogonia. The chain is Ubiquitin-activating enzyme E1 Y (UBE1Y) from Osphranter rufus (Red kangaroo).